The following is a 793-amino-acid chain: Toll-like receptor 2 type-1 (793 aa).

A signal peptide spans 1–25 (MFNQSKQKPTMKLMWQAWLIYTALA). Residues 26 to 597 (AHLPEEQALR…QLSLMECHRS (572 aa)) lie on the Extracellular side of the membrane. A disulfide bridge links Cys-41 with Cys-47. N-linked (GlcNAc...) asparagine glycosylation occurs at Asn-48. 6 LRR repeats span residues 64-85 (KITVLNLAHNRIKLIRTHDLQK), 88-109 (NLRTLLLQSNQISSIDEDSFGS), 112-133 (KLELLDLSNNSLAHLSPVWFGP), 136-157 (SLQHLRIQGNSYSDLGESSPFS), 161-182 (NLSSLHLGNPQFSIIRQGNFEG), and 185-206 (FLNTLRIDGDNLSQYEPGSLKS). N-linked (GlcNAc...) asparagine glycosylation is present at Asn-120. 4 N-linked (GlcNAc...) asparagine glycosylation sites follow: Asn-161, Asn-195, Asn-254, and Asn-325. Residues Cys-362 and Cys-391 are joined by a disulfide bond. 7 LRR repeats span residues 370–391 (SLLYLDFHDNLLVNNRLGETIC), 397–418 (SLQTLNLSKNSLKSLKQAARYI), 423–444 (KLINLDISENNFGEIPDMCEWP), 446–467 (NLKYLNLSSTQIPKLTTCIPST), 468–486 (LEVLDVSANNLQDFGLQLP), 487–508 (FLKELYLTKNHLKTLPEATDIP), and 509–530 (NLVAMSISRNKLNSFSKEEFES). N-linked (GlcNAc...) asparagine glycosylation occurs at Asn-402. An intrachain disulfide couples Cys-441 to Cys-463. N-linked (GlcNAc...) asparagine glycosylation occurs at Asn-451. Positions 542–596 (NNFICSCEFLSFIHHEAGIAQVLVGWPESYICDSPLTVRGAQVGSVQLSLMECHR) constitute an LRRCT domain. The helical transmembrane segment at 598–618 (LLVSLICTLVFLFILILVVVG) threads the bilayer. The Cytoplasmic portion of the chain corresponds to 619–793 (YKYHAVWYMR…WENLKAALKS (175 aa)). Residues 648 to 791 (ICYDAFVSYS…MFWENLKAAL (144 aa)) enclose the TIR domain.

Belongs to the Toll-like receptor family. As to quaternary structure, binds MYD88 (via TIR domain). N-glycosylated. TLR2-1 is more heavily glycosylated than TLR2-2. In terms of tissue distribution, highly expressed in ovary. Detected at lower levels in heart, lung, gizzard and testis.

Its subcellular location is the membrane. Functionally, participates in the innate immune response to microbial agents. Acts via MYD88 and TRAF6, leading to NF-kappa-B activation, cytokine secretion and the inflammatory response. Does not respond to LPS and responds with less ability than TLR2-2 to mycoplasmal macrophage-activating lipopeptide-2kD (MALP-2). This chain is Toll-like receptor 2 type-1 (TLR2-1), found in Gallus gallus (Chicken).